Consider the following 331-residue polypeptide: Ornithine carbamoyltransferase (331 aa).

Residues 55–58, Gln82, Arg106, and 133–136 contribute to the carbamoyl phosphate site; these read STRT and HPTQ. Residues Asn166, Asp230, and 234-235 contribute to the L-ornithine site; that span reads SM. Carbamoyl phosphate contacts are provided by residues 272–273 and Arg317; that span reads CL.

It belongs to the aspartate/ornithine carbamoyltransferase superfamily. OTCase family.

It is found in the cytoplasm. It carries out the reaction carbamoyl phosphate + L-ornithine = L-citrulline + phosphate + H(+). It functions in the pathway amino-acid biosynthesis; L-arginine biosynthesis; L-arginine from L-ornithine and carbamoyl phosphate: step 1/3. In terms of biological role, reversibly catalyzes the transfer of the carbamoyl group from carbamoyl phosphate (CP) to the N(epsilon) atom of ornithine (ORN) to produce L-citrulline. This Neisseria meningitidis serogroup B (strain ATCC BAA-335 / MC58) protein is Ornithine carbamoyltransferase (argF).